The following is a 343-amino-acid chain: MFRGKIFVLSLFSIYVLSSAAEKNTSFSALFAFGDSVLDTGNNNFLLTLLKGNYWPYGLSFDYKFPTGRFGNGRVFTDIVAEGLQIKRLVPAYSKIRRISSEDLKTGVCFASGGSGIDDLTSRTLRVLSAGDQVKDFKDYLKKLRRVVKRKKKVKEIVSNAVFLISEGNNDLGYFVAPALLRLQSTTTYTSKMVVWTRKFLKDLYDLGARKFAVMGVMPVGCLPIHRASFGGVFGWCNFLLNRITEDFNMKLQKGLTSYAVEYDFKDAKFVYVDIYGTLMDLVKNPMAYGFTEAKKACCCMPNAIIPCFHPDKYVFYDFAHPSQKAYEVISKPIVYQIAKGLA.

A signal peptide spans Met-1–Ala-21. Asn-24 carries an N-linked (GlcNAc...) asparagine glycan. Residue Ser-36 is the Nucleophile of the active site. Active-site residues include Asp-318 and His-321.

Belongs to the 'GDSL' lipolytic enzyme family. As to expression, flower buds and pollen.

It is found in the secreted. Its subcellular location is the extracellular space. The protein localises to the extracellular matrix. It localises to the pollen coat. Its function is as follows. Required for the formation of pollen coats and male fertility. This chain is GDSL esterase/lipase EXL6 (EXL6), found in Arabidopsis thaliana (Mouse-ear cress).